We begin with the raw amino-acid sequence, 1018 residues long: Pleckstrin homology domain-containing family M member 2 (1018 aa).

N-acetylmethionine is present on M1. Positions 1–289 (MEPREVKDRI…PDQPDACTEL (289 aa)) are interaction with KIF5B. An RUN domain is found at 36–158 (RNHDKVLQRL…IRFDLDLDAP (123 aa)). Disordered stretches follow at residues 210-367 (SAIA…SSEL), 407-440 (TWCS…SEGL), 452-520 (ESPS…DSQL), 526-545 (EPLV…EPGT), and 555-583 (DQPS…THPS). Positions 230–245 (STASDLTSSKTSTKSP) are enriched in low complexity. Positions 258–270 (ETASSDTTPVHTT) are enriched in polar residues. Residues 294-306 (VTKKKKIGKKKKT) show a composition bias toward basic residues. Composition is skewed to polar residues over residues 316 to 325 (HPTSSQQKCG) and 347 to 367 (VLAS…SSEL). Phosphoserine is present on S423. The 103-residue stretch at 770 to 872 (TITKEGMLHY…WMQHLCQAVS (103 aa)) folds into the PH domain.

In terms of assembly, interacts with KLC2 (via TPR repeats). Interacts with KIF5B. Interacts with BORCS5. Interacts (via RUN domain) with ARL8B (GTP-bound form); PLEKHM1 and PLEKHM2 compete for interaction with ARL8B. Interacts with ARL8A.

The protein resides in the cytoplasm. Its subcellular location is the lysosome membrane. In terms of biological role, plays a role in lysosomes movement and localization at the cell periphery acting as an effector of ARL8B. Required for ARL8B to exert its effects on lysosome location, recruits kinesin-1 to lysosomes and hence direct their movement toward microtubule plus ends. Binding to ARL8B provides a link from lysosomal membranes to plus-end-directed motility. Critical factor involved in NK cell-mediated cytotoxicity. Drives the polarization of cytolytic granules and microtubule-organizing centers (MTOCs) toward the immune synapse between effector NK lymphocytes and target cells. Required for maintenance of the Golgi apparatus organization. May play a role in membrane tubulation. The polypeptide is Pleckstrin homology domain-containing family M member 2 (Mus musculus (Mouse)).